The primary structure comprises 179 residues: ATP-dependent protease subunit HslV (179 aa).

Residue Thr7 is part of the active site. Na(+) is bound by residues Gly162, Cys165, and Thr168.

It belongs to the peptidase T1B family. HslV subfamily. In terms of assembly, a double ring-shaped homohexamer of HslV is capped on each side by a ring-shaped HslU homohexamer. The assembly of the HslU/HslV complex is dependent on binding of ATP.

The protein resides in the cytoplasm. It catalyses the reaction ATP-dependent cleavage of peptide bonds with broad specificity.. With respect to regulation, allosterically activated by HslU binding. Functionally, protease subunit of a proteasome-like degradation complex believed to be a general protein degrading machinery. This chain is ATP-dependent protease subunit HslV, found in Bordetella petrii (strain ATCC BAA-461 / DSM 12804 / CCUG 43448).